Here is a 372-residue protein sequence, read N- to C-terminus: N-methyl-L-tryptophan oxidase (372 aa).

Residue 4–34 coordinates FAD; that stretch reads DLIIIGSGSVGAAAGYYATRAGLNVLMTDAH. An S-8alpha-FAD cysteine modification is found at C308.

It belongs to the MSOX/MTOX family. MTOX subfamily. As to quaternary structure, monomer. FAD serves as cofactor.

The enzyme catalyses N(alpha)-methyl-L-tryptophan + O2 + H2O = L-tryptophan + formaldehyde + H2O2. Functionally, catalyzes the oxidative demethylation of N-methyl-L-tryptophan. In Shigella boydii serotype 18 (strain CDC 3083-94 / BS512), this protein is N-methyl-L-tryptophan oxidase.